A 631-amino-acid polypeptide reads, in one-letter code: Phosphomethylpyrimidine synthase (631 aa).

Residues Asn239, Met268, Tyr297, His333, 353-355, 394-397, and Glu433 each bind substrate; these read SRG and DGLR. Residue His437 participates in Zn(2+) binding. Substrate is bound at residue Tyr460. Position 501 (His501) interacts with Zn(2+). Positions 581, 584, and 589 each coordinate [4Fe-4S] cluster.

It belongs to the ThiC family. In terms of assembly, homodimer. [4Fe-4S] cluster serves as cofactor.

It carries out the reaction 5-amino-1-(5-phospho-beta-D-ribosyl)imidazole + S-adenosyl-L-methionine = 4-amino-2-methyl-5-(phosphooxymethyl)pyrimidine + CO + 5'-deoxyadenosine + formate + L-methionine + 3 H(+). Its pathway is cofactor biosynthesis; thiamine diphosphate biosynthesis. Catalyzes the synthesis of the hydroxymethylpyrimidine phosphate (HMP-P) moiety of thiamine from aminoimidazole ribotide (AIR) in a radical S-adenosyl-L-methionine (SAM)-dependent reaction. This chain is Phosphomethylpyrimidine synthase, found in Shigella flexneri serotype 5b (strain 8401).